A 58-amino-acid polypeptide reads, in one-letter code: Keratin-associated protein 19-6 (58 aa).

The protein belongs to the KRTAP type 19 family. As to quaternary structure, interacts with hair keratins.

Its function is as follows. In the hair cortex, hair keratin intermediate filaments are embedded in an interfilamentous matrix, consisting of hair keratin-associated proteins (KRTAP), which are essential for the formation of a rigid and resistant hair shaft through their extensive disulfide bond cross-linking with abundant cysteine residues of hair keratins. The matrix proteins include the high-sulfur and high-glycine-tyrosine keratins. This Homo sapiens (Human) protein is Keratin-associated protein 19-6 (KRTAP19-6).